Reading from the N-terminus, the 383-residue chain is Flagellum-associated coiled-coil domain-containing protein 1 (383 aa).

The disordered stretch occupies residues 26–79; the sequence is PYPLPKHPTGKFKPVLPPPISKEHNSLLSQPGKSTVSPRDKVQSGNTESSKAPS. Residues 51 to 77 are compositionally biased toward polar residues; it reads SLLSQPGKSTVSPRDKVQSGNTESSKA. Coiled-coil stretches lie at residues 125–220 and 276–359; these read TDII…YLKS and KKMN…FQTK. The residue at position 354 (K354) is an N6-acetyllysine.

In terms of tissue distribution, isoform 1 is specific to germ cells of the testis and localizes to the principal piece of the sperm flagellum. Isoform 2 seems to be expressed mainly in somatic cells of the testis, and is not detected in mature spermatozoa (at protein level). Isoform 2 may also be expressed weakly in brain.

The protein localises to the cytoplasm. It is found in the cytoplasmic granule. Its subcellular location is the cell projection. The protein resides in the cilium. It localises to the flagellum. The protein is Flagellum-associated coiled-coil domain-containing protein 1 of Mus musculus (Mouse).